The primary structure comprises 242 residues: uncharacterized protein (242 aa).

One can recognise an HTH gntR-type domain in the interval 8–76 (TPLYIQLKQI…QGKGTFVKSP (69 aa)). Residues 36 to 55 (ENELCTKYNVSRITVRKAIL) constitute a DNA-binding region (H-T-H motif).

This is an uncharacterized protein from Bacillus subtilis (strain 168).